Consider the following 211-residue polypeptide: Urease accessory protein UreF (211 aa).

The interval 68-93 (LAPDGADRETDARTPSPAARDASRSQ) is disordered.

Belongs to the UreF family. As to quaternary structure, ureD, UreF and UreG form a complex that acts as a GTP-hydrolysis-dependent molecular chaperone, activating the urease apoprotein by helping to assemble the nickel containing metallocenter of UreC. The UreE protein probably delivers the nickel.

The protein localises to the cytoplasm. Required for maturation of urease via the functional incorporation of the urease nickel metallocenter. This is Urease accessory protein UreF from Mycobacterium marinum (strain ATCC BAA-535 / M).